The following is a 362-amino-acid chain: Probable dual-specificity RNA methyltransferase RlmN (362 aa).

Glutamate 105 acts as the Proton acceptor in catalysis. One can recognise a Radical SAM core domain in the interval 111 to 344 (HEYGNSICVT…VTIRREQGHD (234 aa)). A disulfide bond links cysteine 118 and cysteine 349. The [4Fe-4S] cluster site is built by cysteine 125, cysteine 129, and cysteine 132. S-adenosyl-L-methionine-binding positions include 175–176 (GE), serine 207, 230–232 (SLH), and asparagine 306. Cysteine 349 (S-methylcysteine intermediate) is an active-site residue.

Belongs to the radical SAM superfamily. RlmN family. The cofactor is [4Fe-4S] cluster.

The protein localises to the cytoplasm. It catalyses the reaction adenosine(2503) in 23S rRNA + 2 reduced [2Fe-2S]-[ferredoxin] + 2 S-adenosyl-L-methionine = 2-methyladenosine(2503) in 23S rRNA + 5'-deoxyadenosine + L-methionine + 2 oxidized [2Fe-2S]-[ferredoxin] + S-adenosyl-L-homocysteine. The catalysed reaction is adenosine(37) in tRNA + 2 reduced [2Fe-2S]-[ferredoxin] + 2 S-adenosyl-L-methionine = 2-methyladenosine(37) in tRNA + 5'-deoxyadenosine + L-methionine + 2 oxidized [2Fe-2S]-[ferredoxin] + S-adenosyl-L-homocysteine. Specifically methylates position 2 of adenine 2503 in 23S rRNA and position 2 of adenine 37 in tRNAs. In Bacillus mycoides (strain KBAB4) (Bacillus weihenstephanensis), this protein is Probable dual-specificity RNA methyltransferase RlmN.